Here is a 272-residue protein sequence, read N- to C-terminus: S-adenosylmethionine decarboxylase proenzyme (272 aa).

Ser-122 (schiff-base intermediate with substrate; via pyruvic acid) is an active-site residue. Position 122 is a pyruvic acid (Ser); by autocatalysis (Ser-122). The Proton acceptor; for processing activity role is filled by His-127. Residue Cys-150 is the Proton donor; for catalytic activity of the active site.

Belongs to the prokaryotic AdoMetDC family. Type 2 subfamily. Heterooctamer of four alpha and four beta chains arranged as a tetramer of alpha/beta heterodimers. Requires pyruvate as cofactor. Is synthesized initially as an inactive proenzyme. Formation of the active enzyme involves a self-maturation process in which the active site pyruvoyl group is generated from an internal serine residue via an autocatalytic post-translational modification. Two non-identical subunits are generated from the proenzyme in this reaction, and the pyruvate is formed at the N-terminus of the alpha chain, which is derived from the carboxyl end of the proenzyme. The post-translation cleavage follows an unusual pathway, termed non-hydrolytic serinolysis, in which the side chain hydroxyl group of the serine supplies its oxygen atom to form the C-terminus of the beta chain, while the remainder of the serine residue undergoes an oxidative deamination to produce ammonia and the pyruvoyl group blocking the N-terminus of the alpha chain.

It carries out the reaction S-adenosyl-L-methionine + H(+) = S-adenosyl 3-(methylsulfanyl)propylamine + CO2. It functions in the pathway amine and polyamine biosynthesis; S-adenosylmethioninamine biosynthesis; S-adenosylmethioninamine from S-adenosyl-L-methionine: step 1/1. Functionally, catalyzes the decarboxylation of S-adenosylmethionine to S-adenosylmethioninamine (dcAdoMet), the propylamine donor required for the synthesis of the polyamines spermine and spermidine from the diamine putrescine. The sequence is that of S-adenosylmethionine decarboxylase proenzyme from Clostridium botulinum (strain Alaska E43 / Type E3).